The primary structure comprises 505 residues: Catalase (505 aa).

Catalysis depends on residues H56 and N129. Heme is bound at residue Y339.

This sequence belongs to the catalase family. Heme is required as a cofactor.

It localises to the cytoplasm. The enzyme catalyses 2 H2O2 = O2 + 2 H2O. Its function is as follows. Decomposes hydrogen peroxide into water and oxygen; serves to protect cells from the toxic effects of hydrogen peroxide. This chain is Catalase (katA), found in Helicobacter pylori (strain ATCC 700392 / 26695) (Campylobacter pylori).